The sequence spans 969 residues: Aspartic protease 5 (969 aa).

The N-terminal stretch at 1-22 (MEAGAMGGSSFLSFSSGPSAET) is a signal peptide. The span at 1-45 (MEAGAMGGSSFLSFSSGPSAETSPSSLSPPTSSSPSPSPQLVSDS) shows a compositional bias: low complexity. Disordered regions lie at residues 1–65 (MEAG…SSRT), 79–104 (ENEA…AGHL), 128–149 (SSAT…RSSS), 173–193 (SSSS…SACG), and 311–382 (FLSL…DLPR). Over 23 to 820 (SPSSLSPPTS…PEGLPLSPQQ (798 aa)) the chain is Lumenal. Over residues 311–324 (FLSLSSSPRSLASD) the composition is skewed to low complexity. A compositionally biased stretch (basic and acidic residues) spans 335–355 (QSREQRGEREGERQRPDKGEE). The 346-residue stretch at 413–758 (YFLDILVGTP…DREQDRVGFA (346 aa)) folds into the Peptidase A1 domain. Aspartate 431 is an active-site residue. The interval 608–635 (PPESESTPATEALRPVAGESASRRISEK) is disordered. Aspartate 682 is a catalytic residue. The interval 768–794 (DQRPRGPDSGDGPKGRPTAPFTVPPLR) is disordered. Residues 769 to 781 (QRPRGPDSGDGPK) show a composition bias toward basic and acidic residues. A helical membrane pass occupies residues 821–841 (LWVAAALVVVAILIAVTVILL). Over 842–969 (HTIKRPSRSS…TLLDLPLGGE (128 aa)) the chain is Cytoplasmic. Residues 922 to 969 (EDDGDFFGDDSVPSAEEQETAPSLSLREESSPFSASQSTLLDLPLGGE) form a disordered region. Residues 952 to 961 (SPFSASQSTL) show a composition bias toward polar residues.

It belongs to the peptidase A1 family. In terms of processing, may be auto-cleaved to produce a 55 kDa form.

The protein localises to the golgi apparatus membrane. Its function is as follows. In tachyzoites, plays an essential role in the export of several dense granule proteins into the host cell by cleaving the localization motif RRLxx (termed Toxoplasma export element (TEXEL)) located downstream of the N-terminal secretory signal sequence. However, can also regulate the export of proteins that lack the TEXEL motif, such as GRA24. Requires Arg at P3 and P2, and Leu at P1 in the substrate TEXEL motif and, specifically, cleaves after Leu. Cleaves GRA16; proteolytic cleavage is essential for the correct trafficking of GRA16 from the parasite into the infected host nucleus. Cleaves GRA19 and GRA20. Cleaves MYR1. Cleaves LCAT, GRA44, GRA46, GRA46, ROP35/WNG1 and ROP34/WNG2. By regulating the export of dense granule proteins into the host cell, regulates multiple processes during tachyzoite infection of host cells, including recruitment of host mitochondria to the parasitophorous vacuole (PV), formation of the nanotubular network (NTN) or intravacuolar network (IVN) which are membranous tubules that bud from the PV membrane into the vacuolar lumen and, up-regulation of host cell genes to facilitate the parasite infection and modulate the host innate immune response. At the bradyzoite stage, also involved in the formation of the cyst wall. The protein is Aspartic protease 5 of Toxoplasma gondii.